A 146-amino-acid polypeptide reads, in one-letter code: Probable cyclic pyranopterin monophosphate synthase (146 aa).

Residues 66-68 (LTH) and 102-103 (ME) contribute to the substrate site. Asp-117 is a catalytic residue.

It belongs to the MoaC family. In terms of assembly, homohexamer; trimer of dimers.

The catalysed reaction is (8S)-3',8-cyclo-7,8-dihydroguanosine 5'-triphosphate = cyclic pyranopterin phosphate + diphosphate. Its pathway is cofactor biosynthesis; molybdopterin biosynthesis. Catalyzes the conversion of (8S)-3',8-cyclo-7,8-dihydroguanosine 5'-triphosphate to cyclic pyranopterin monophosphate (cPMP). The sequence is that of Probable cyclic pyranopterin monophosphate synthase from Aeropyrum pernix (strain ATCC 700893 / DSM 11879 / JCM 9820 / NBRC 100138 / K1).